Consider the following 561-residue polypeptide: Putative transport protein YbjL (561 aa).

The next 5 membrane-spanning stretches (helical) occupy residues 8 to 28 (LLNGNYILLLFVVLALGLCLG), 32 to 52 (LGSVQLGNSIGVLVVSLLLGQ), 66 to 86 (FMLFIFCVGVEAGPNFFSIFF), 94 to 114 (MLALVMVGSALLIALGLGKLF), and 158 to 178 (NLSLGYALTYLIGLVSLIVGA). RCK C-terminal domains follow at residues 200–288 (RGLD…SFRN) and 292–373 (VFDR…RIGF). 5 consecutive transmembrane segments (helical) span residues 383–403 (LLAFCAFFIIGLMIGMITFQF), 406–426 (FSFGIGNAAGLLFAGIMLGFL), 447–467 (FGLMVFMAGVGLSAGSGINNG), 475–495 (MLIAGLVVSLVPVVICFLFGA), and 537–557 (GTYAIANVLLTLAGTLIVIIW).

Belongs to the AAE transporter (TC 2.A.81) family. YbjL subfamily.

The protein resides in the cell membrane. This Salmonella choleraesuis (strain SC-B67) protein is Putative transport protein YbjL.